Here is a 169-residue protein sequence, read N- to C-terminus: MHHRPERDKRVTTHVALVARAFGAKGIFIHGEDMNLLKTIEKVKANWGGKYFSIEFVKNPKKVVRDWRNSGGIVVHLTMYGIPIDNIMEKIINKNTKILVVVGSEKVEGWYYYNSDYNIAIGNQPHSEVAALAIFLDRIYKGGELNIQFSDAKLSIIPQERGKKVRKNE.

Residues leucine 77, 103-107 (GSEKV), and 121-128 (IGNQPHSE) contribute to the S-adenosyl-L-methionine site.

The protein belongs to the aTrm56 family. In terms of assembly, homodimer.

It localises to the cytoplasm. It catalyses the reaction cytidine(56) in tRNA + S-adenosyl-L-methionine = 2'-O-methylcytidine(56) in tRNA + S-adenosyl-L-homocysteine + H(+). Specifically catalyzes the AdoMet-dependent 2'-O-ribose methylation of cytidine at position 56 in tRNAs. This is tRNA (cytidine(56)-2'-O)-methyltransferase from Sulfurisphaera tokodaii (strain DSM 16993 / JCM 10545 / NBRC 100140 / 7) (Sulfolobus tokodaii).